The chain runs to 55 residues: Large ribosomal subunit protein bL33 (55 aa).

This sequence belongs to the bacterial ribosomal protein bL33 family.

The protein is Large ribosomal subunit protein bL33 of Aromatoleum aromaticum (strain DSM 19018 / LMG 30748 / EbN1) (Azoarcus sp. (strain EbN1)).